Reading from the N-terminus, the 311-residue chain is MKIAVLGAAGGIGQALALLLKLQLPAGSELSLYDIAPVTPGVAADVSHIPTAVKIQGFAGEDPTPALENADVVLISAGVARKPGMDRSDLFNINAGIVKNLIEKVAKTCPKACVGIITNPVNTTVAIAAEVLKKAGVYDKRKLFGVTTLDVLRSETFVAELKGLNVSRIAVPVIGGHSGVTILPLLSQVQYAEWEEDEIAPLTKRIQNAGTEVVEAKAGGGSATLSMAQAAARFALSLVQGLSGETVVECTYVEGDGKYARFFAQPVRLGKEGVEEILPVGTLSAFEQKALEDMLPTLRADIELGEKFVNN.

Residues G7–G13 and D34 contribute to the NAD(+) site. Substrate is bound by residues R81 and R87. Residues N94 and I117–N119 contribute to the NAD(+) site. The substrate site is built by N119 and R153. Catalysis depends on H177, which acts as the Proton acceptor. Position 227 (M227) interacts with NAD(+).

It belongs to the LDH/MDH superfamily. MDH type 1 family. In terms of assembly, homodimer.

The enzyme catalyses (S)-malate + NAD(+) = oxaloacetate + NADH + H(+). Functionally, catalyzes the reversible oxidation of malate to oxaloacetate. This is Malate dehydrogenase from Histophilus somni (strain 129Pt) (Haemophilus somnus).